The primary structure comprises 99 residues: Co-chaperonin GroES (99 aa).

The protein belongs to the GroES chaperonin family. Heptamer of 7 subunits arranged in a ring. Interacts with the chaperonin GroEL.

The protein localises to the cytoplasm. Functionally, together with the chaperonin GroEL, plays an essential role in assisting protein folding. The GroEL-GroES system forms a nano-cage that allows encapsulation of the non-native substrate proteins and provides a physical environment optimized to promote and accelerate protein folding. GroES binds to the apical surface of the GroEL ring, thereby capping the opening of the GroEL channel. The protein is Co-chaperonin GroES of Corynebacterium glutamicum (strain R).